We begin with the raw amino-acid sequence, 172 residues long: Bifunctional protein PyrR (172 aa).

The PRPP-binding motif lies at 90 to 102; it reads LVLIDDVLMSGRT.

Belongs to the purine/pyrimidine phosphoribosyltransferase family. PyrR subfamily.

It carries out the reaction UMP + diphosphate = 5-phospho-alpha-D-ribose 1-diphosphate + uracil. Its function is as follows. Regulates the transcription of the pyrimidine nucleotide (pyr) operon in response to exogenous pyrimidines. Also displays a weak uracil phosphoribosyltransferase activity which is not physiologically significant. This Pseudomonas putida (strain W619) protein is Bifunctional protein PyrR.